Consider the following 405-residue polypeptide: Protein PAG1 (405 aa).

The signal sequence occupies residues 1–50 (MVSLIILFRLTFAIANRVRTLMKVLVIVSFFVLTGSASADSGALSLSGAA). Asn55, Asn104, Asn256, and Asn351 each carry an N-linked (GlcNAc...) asparagine glycan. Residue Ala391 is the site of GPI-anchor amidated alanine attachment. The propeptide at 392-405 (DSLRRTLALLFLLF) is removed in mature form.

The protein localises to the cell membrane. This Trypanosoma brucei brucei protein is Protein PAG1 (PAG1).